A 161-amino-acid chain; its full sequence is 3-isopropylmalate dehydratase small subunit (161 aa).

The protein belongs to the LeuD family. LeuD type 2 subfamily. In terms of assembly, heterodimer of LeuC and LeuD.

It carries out the reaction (2R,3S)-3-isopropylmalate = (2S)-2-isopropylmalate. It functions in the pathway amino-acid biosynthesis; L-leucine biosynthesis; L-leucine from 3-methyl-2-oxobutanoate: step 2/4. Catalyzes the isomerization between 2-isopropylmalate and 3-isopropylmalate, via the formation of 2-isopropylmaleate. The protein is 3-isopropylmalate dehydratase small subunit of Clostridium botulinum (strain Eklund 17B / Type B).